A 470-amino-acid chain; its full sequence is MLRGISQLPAVATMSWVLLPVLWLIVQTQAIAIKQTPELTLHEIVCPKKLHILHKREIKNNQTEKHGKEERYEPEVQYQMILNGEEIILSLQKTKHLLGPDYTETLYSPRGEEITTKPENMEHCYYKGNILNEKNSVASISTCDGLRGYFTHHHQRYQIKPLKSTDEKEHAVFTSNQEEQDPANHTCGVKSTDGKQGPIRISRSLKSPEKEDFLRAQKYIDLYLVLDNAFYKNYNENLTLIRSFVFDVMNLLNVIYNTIDVQVALVGMEIWSDGDKIKVVPSASTTFDNFLRWHSSNLGKKIHDHAQLLSGISFNNRRVGLAASNSLCSPSSVAVIEAKKKNNVALVGVMSHELGHVLGMPDVPFNTKCPSGSCVMNQYLSSKFPKDFSTSCRAHFERYLLSQKPKCLLQAPIPTNIMTTPVCGNHLLEVGEDCDCGSPKECTNLCCEALTCKLKPGTDCGGDAPNHTTE.

The first 30 residues, 1-30, serve as a signal peptide directing secretion; that stretch reads MLRGISQLPAVATMSWVLLPVLWLIVQTQA. The propeptide occupies 31–205; that stretch reads IAIKQTPELT…QGPIRISRSL (175 aa). An N-linked (GlcNAc...) asparagine glycan is attached at N61. Residues 173-200 are disordered; the sequence is FTSNQEEQDPANHTCGVKSTDGKQGPIR. The N-linked (GlcNAc...) (complex) asparagine glycan is linked to N184. The region spanning 218–412 is the Peptidase M12B domain; the sequence is KYIDLYLVLD…QKPKCLLQAP (195 aa). N237 is a glycosylation site (N-linked (GlcNAc...) asparagine). 2 disulfide bridges follow: C328–C407 and C369–C374. H352 is a binding site for Zn(2+). E353 is a catalytic residue. Residues H356 and D362 each contribute to the Zn(2+) site. In terms of domain architecture, Disintegrin spans 420–470; it reads TPVCGNHLLEVGEDCDCGSPKECTNLCCEALTCKLKPGTDCGGDAPNHTTE. N466 is a glycosylation site (N-linked (GlcNAc...) asparagine).

Zn(2+) serves as cofactor. Expressed highly in the small intestine and appendix, moderately in lymph node, mucosal lining of the colon, thymus, spleen and very weakly in the bone marrow. Predominantly expressed in dendritic cells (DC) of the germinal center. Weakly expressed in monocyte and highly expressed in macrophage. Absent in immature DC.

It is found in the secreted. May play an important role in the control of the immune response and during pregnancy. The protein is ADAM DEC1 (ADAMDEC1) of Homo sapiens (Human).